The primary structure comprises 427 residues: UDP-N-acetyl-D-mannosamine dehydrogenase (427 aa).

Residues Y19, I20, D39, R44, T91, and T130 each coordinate NAD(+). Residues R155, V156, K207, N211, R214, H245, R247, and G258 each contribute to the UDP-N-acetyl-alpha-D-mannosaminouronate site. The Proton donor/acceptor role is filled by K207. The active-site Nucleophile is C261. Y318 and K319 together coordinate UDP-N-acetyl-alpha-D-mannosaminouronate. NAD(+) is bound at residue R326. Position 404 (K404) interacts with UDP-N-acetyl-alpha-D-mannosaminouronate.

Belongs to the UDP-glucose/GDP-mannose dehydrogenase family. Homotetramer; probably dimer of dimers.

It catalyses the reaction UDP-N-acetyl-alpha-D-mannosamine + 2 NAD(+) + H2O = UDP-N-acetyl-alpha-D-mannosaminouronate + 2 NADH + 3 H(+). Its function is as follows. Catalyzes the four-electron oxidation of UDP-N-acetyl-D-mannosamine (UDP-ManNAc), reducing NAD(+) and releasing UDP-N-acetylmannosaminuronic acid (UDP-ManNAcA). Cannot use NADP instead of NAD. In Methanococcus maripaludis (strain DSM 14266 / JCM 13030 / NBRC 101832 / S2 / LL), this protein is UDP-N-acetyl-D-mannosamine dehydrogenase (wecC).